Consider the following 427-residue polypeptide: Trigger factor (427 aa).

A PPIase FKBP-type domain is found at 163 to 248 (GDTVVIDFVG…IHEVKAKEVP (86 aa)).

Belongs to the FKBP-type PPIase family. Tig subfamily.

Its subcellular location is the cytoplasm. It carries out the reaction [protein]-peptidylproline (omega=180) = [protein]-peptidylproline (omega=0). Involved in protein export. Acts as a chaperone by maintaining the newly synthesized protein in an open conformation. Functions as a peptidyl-prolyl cis-trans isomerase. The chain is Trigger factor from Streptococcus pneumoniae (strain JJA).